The chain runs to 302 residues: Uricase (302 aa).

Ser-2 carries the post-translational modification N-acetylserine. Catalysis depends on charge relay system residues Lys-11 and Thr-58. Positions 58, 59, 160, 177, 228, 229, and 255 each coordinate 5-hydroxyisourate. Residue Thr-58 participates in O2 binding. Urate contacts are provided by Thr-58, Asp-59, Phe-160, Arg-177, Val-228, Gln-229, and Asn-255. O2 is bound at residue Asn-255. His-257 functions as the Charge relay system in the catalytic mechanism. The short motif at 300 to 302 (SKL) is the Microbody targeting signal element.

The protein belongs to the uricase family. Homotetramer.

The protein localises to the peroxisome. The catalysed reaction is urate + O2 + H2O = 5-hydroxyisourate + H2O2. It participates in purine metabolism; urate degradation; (S)-allantoin from urate: step 1/3. 8-Azaxanthine is one of the most potent competitive inhibitors of uricase activity. Hypoxanthine has only a small inhibitor effect, and caffeine has no effect at all. Azide not only competes with dioxygen but also competes with the substrate for its enzymatic site. Urate oxidase is a cofactorless enzyme involved in the metabolism of purines. Catalyzes, in the presence of molecular oxygen, the hydroxylation of uric acid to metastable 5-hydroxyisourate (5-HIU) which is further degraded to allantoin. The sequence is that of Uricase from Aspergillus flavus.